The chain runs to 201 residues: Twin horsetail protein 2 (201 aa).

The protein resides in the nucleus. Functionally, required for correct meiotic chromosome segregation and recombination. This Schizosaccharomyces pombe (strain 972 / ATCC 24843) (Fission yeast) protein is Twin horsetail protein 2 (tht2).